Reading from the N-terminus, the 885-residue chain is Cytosolic carboxypeptidase-like protein 5 (885 aa).

In terms of domain architecture, Peptidase M14 spans 150–576 (YPFSYAECQD…AVAVAALDMA (427 aa)). Zn(2+) contacts are provided by His247 and Glu250. Disordered stretches follow at residues 341-364 (SGSALKTSNQSNTSPPVATPTERE) and 392-428 (ESWEKSGVQREAEHSDENESAQSRGETNSAPSEQVPP). A compositionally biased stretch (polar residues) spans 344–356 (ALKTSNQSNTSPP). Residues 393–408 (SWEKSGVQREAEHSDE) are compositionally biased toward basic and acidic residues. Over residues 411 to 428 (SAQSRGETNSAPSEQVPP) the composition is skewed to polar residues. His440 lines the Zn(2+) pocket. The Proton donor/acceptor role is filled by Glu522. The segment covering 606–668 (STGLTSNNRR…KSSPSFTFGT (63 aa)) has biased composition (polar residues). Disordered stretches follow at residues 606–788 (STGL…RTAL) and 866–885 (ALLKNSSRQTDQHIHRSLPT). The span at 682–691 (RECKAQEKRR) shows a compositional bias: basic and acidic residues. Residues 712–749 (LSAPVRAPLSPSSSSSSSSSSPSSSSSAPGPGSISLAG) are compositionally biased toward low complexity.

This sequence belongs to the peptidase M14 family. Zn(2+) serves as cofactor.

The protein localises to the cytoplasm. Its subcellular location is the cytosol. It localises to the nucleus. It is found in the cytoskeleton. The protein resides in the spindle. The protein localises to the midbody. The catalysed reaction is gamma-L-glutamyl-L-glutamyl-[protein] + H2O = L-glutamyl-[protein] + L-glutamate. It catalyses the reaction (L-glutamyl)(n+1)-gamma-L-glutamyl-L-glutamyl-[protein] + H2O = (L-glutamyl)(n)-gamma-L-glutamyl-L-glutamyl-[protein] + L-glutamate. The enzyme catalyses C-terminal L-alpha-aminoacyl-L-glutamyl-[tubulin] + H2O = C-terminal L-alpha-aminoacyl-[tubulin] + L-glutamate. It carries out the reaction C-terminal L-alpha-aminoacyl-L-glutamyl-L-glutamyl-[tubulin] + H2O = C-terminal L-alpha-aminoacyl-L-glutamyl-[tubulin] + L-glutamate. Metallocarboxypeptidase that mediates deglutamylation of tubulin and non-tubulin target proteins. Catalyzes the removal of polyglutamate side chains present on the gamma-carboxyl group of glutamate residues within the C-terminal tail of alpha- and beta-tubulin. Cleaves alpha- and gamma-linked polyglutamate tubulin side-chain, as well as the branching point glutamate. Also catalyzes the removal of alpha-linked glutamate residues from the carboxy-terminus of alpha-tubulin. The sequence is that of Cytosolic carboxypeptidase-like protein 5 (agbl5) from Danio rerio (Zebrafish).